The primary structure comprises 165 residues: uncharacterized protein (165 aa).

A disordered region spans residues 53-123 (CSEKTGSAPN…PAPSSGRQGG (71 aa)). Low complexity predominate over residues 58 to 71 (GSAPNPGSSAPAPA).

This is an uncharacterized protein from Treponema pallidum (strain Nichols).